The sequence spans 318 residues: tRNA-cytidine(32) 2-sulfurtransferase (318 aa).

A PP-loop motif motif is present at residues 65–70 (SGGKDS). Residues Cys-140, Cys-143, and Cys-231 each contribute to the [4Fe-4S] cluster site.

The protein belongs to the TtcA family. Homodimer. The cofactor is Mg(2+). [4Fe-4S] cluster serves as cofactor.

The protein resides in the cytoplasm. It carries out the reaction cytidine(32) in tRNA + S-sulfanyl-L-cysteinyl-[cysteine desulfurase] + AH2 + ATP = 2-thiocytidine(32) in tRNA + L-cysteinyl-[cysteine desulfurase] + A + AMP + diphosphate + H(+). Its pathway is tRNA modification. Catalyzes the ATP-dependent 2-thiolation of cytidine in position 32 of tRNA, to form 2-thiocytidine (s(2)C32). The sulfur atoms are provided by the cysteine/cysteine desulfurase (IscS) system. This Herminiimonas arsenicoxydans protein is tRNA-cytidine(32) 2-sulfurtransferase.